Reading from the N-terminus, the 753-residue chain is MPILTCRYKILFLYNLRNCFTFQNQRCLIPYGTTTTIRWYNANFQAVQNNFSDYKNELISSHRPEASSLLDFLVKDQKKSGDISLHTKFNLYVDDLLKKSEKGQIKKFINDIKKDLATESQLPLSAPFKDESTRTMTDPQVLAYIHQSMPYQYASLYSVLTDLKIVNSDVSCKSQHILDCGKGPGIGALASYSVFPTPNSVSIVEENPFLKKIIYDIHHNIYPSTSPNPTSPVTLNRLPLGKKDSYTLVIASNKLLEMKSEKELFDYLRSLWSLVSNDGGLLVLCERGTKRGFSLIQRARTFLLQKSKNTSDKQFNAHIVAPCPHDGRCPIDIENGVRANICSFKQHFFLSPFSRLYVPRSHRRSSDRSHYSYVVIQKGITRPLNNTTQRFKNDEDLLENVNVTSPTLKNWPRIIRPPLKRDGHVIIDVCDSDARLRRNIVPKSQGKLAYRLARKSAWGDLFPLEGKVQSTSPSSKITKHLKDASSTYSINPPSYNKPKVERNTTADPIFVGKRFYSTNRHKAFSRFADFNSHRFPCIFTSFSCYNCISGTRKYSRQYSRDKFHYNQRTTIYYLVAISIFALGLTYAAVPLYRLFCSKTGYGGTLNTDQSRMNAERMVPRKDNKRIRVTFNGDVAGNLSWKLWPQQREIYVLPGETALGFYTAENTSDHDIVGVATYNIVPGQAAVYFSKVACFCFEEQKLDAHEKVDLPVFFFIDPEFADDPNMKDIDDILLSYTFFEARYDTNGNLLTKLN.

The transit peptide at 1–39 directs the protein to the mitochondrion; it reads MPILTCRYKILFLYNLRNCFTFQNQRCLIPYGTTTTIRW. Residues cysteine 323, cysteine 329, cysteine 342, and cysteine 430 each coordinate [4Fe-4S] cluster. Residues 571-591 form a helical membrane-spanning segment; sequence IYYLVAISIFALGLTYAAVPL. Topologically, residues 592–753 are mitochondrial intermembrane; sequence YRLFCSKTGY…TNGNLLTKLN (162 aa).

This sequence in the N-terminal section; belongs to the methyltransferase superfamily. Rsm22 family. The protein in the C-terminal section; belongs to the COX11/CtaG family. As to quaternary structure, associates with the mitochondrial ribosome (mitoribosome). Only transiently interacts with the mitoribosome. Specific enzymatic cleavages in vivo by mitochondrial processing peptidase (MPP) yield mature proteins including rsm22-1 and cox11-1.

Its subcellular location is the mitochondrion. It localises to the mitochondrion inner membrane. Mitochondrial ribosome (mitoribosome) assembly factor. Binds at the interface of the head and body domains of the mitochondrial small ribosomal subunit (mt-SSU), occluding the mRNA channel and preventing compaction of the head domain towards the body. Probable inactive methyltransferase: retains the characteristic folding and ability to bind S-adenosyl-L-methionine, but it probably lost its methyltransferase activity. In terms of biological role, exerts its effect at some terminal stage of cytochrome c oxidase synthesis, probably by being involved in the insertion of the copper B into subunit I. This Schizosaccharomyces pombe (strain 972 / ATCC 24843) (Fission yeast) protein is Rsm22-cox11 tandem protein 1, mitochondrial (cox1101).